The following is a 269-amino-acid chain: Formamidopyrimidine-DNA glycosylase (269 aa).

The active-site Schiff-base intermediate with DNA is Pro2. The active-site Proton donor is Glu3. Catalysis depends on Lys57, which acts as the Proton donor; for beta-elimination activity. Residues His90, Arg109, and Lys150 each coordinate DNA. The FPG-type zinc finger occupies 235 to 269; sequence LVYGKAGEPCPECGEPLQELKIGQRNTFFCNECQQ. The active-site Proton donor; for delta-elimination activity is Arg259.

It belongs to the FPG family. As to quaternary structure, monomer. It depends on Zn(2+) as a cofactor.

It catalyses the reaction Hydrolysis of DNA containing ring-opened 7-methylguanine residues, releasing 2,6-diamino-4-hydroxy-5-(N-methyl)formamidopyrimidine.. The enzyme catalyses 2'-deoxyribonucleotide-(2'-deoxyribose 5'-phosphate)-2'-deoxyribonucleotide-DNA = a 3'-end 2'-deoxyribonucleotide-(2,3-dehydro-2,3-deoxyribose 5'-phosphate)-DNA + a 5'-end 5'-phospho-2'-deoxyribonucleoside-DNA + H(+). Involved in base excision repair of DNA damaged by oxidation or by mutagenic agents. Acts as a DNA glycosylase that recognizes and removes damaged bases. Has a preference for oxidized purines, such as 7,8-dihydro-8-oxoguanine (8-oxoG). Has AP (apurinic/apyrimidinic) lyase activity and introduces nicks in the DNA strand. Cleaves the DNA backbone by beta-delta elimination to generate a single-strand break at the site of the removed base with both 3'- and 5'-phosphates. This Vibrio parahaemolyticus serotype O3:K6 (strain RIMD 2210633) protein is Formamidopyrimidine-DNA glycosylase.